Here is a 1288-residue protein sequence, read N- to C-terminus: Photoreceptor cilium actin regulator (1288 aa).

A lipid anchor (N-myristoyl glycine) is attached at Gly2. Cys3 carries the S-palmitoyl cysteine lipid modification. 9 disordered regions span residues 78–147, 368–401, 423–453, 467–527, 563–605, 686–707, 813–1109, 1132–1169, and 1190–1288; these read MGDP…KWKR, QTSWDLAPEPEEWKSVTSPHTEARQSGHTWQQSP, QPRAQDEARSPCLSSTSPENITSPPLKLGTS, PHLS…PFQA, DWSE…SHVE, QKCNPHPEDEQGKAGKLPNAIP, AAKS…EDSQ, EAKPPLSTAHPLTPPSLPPEAGGPLGNPAECWKNSSGP, and LRRT…EEVS. Polar residues-rich tracts occupy residues 96–109, 382–401, and 434–453; these read TKTSSSQLNKSQSH, SVTSPHTEARQSGHTWQQSP, and CLSSTSPENITSPPLKLGTS. Acidic residues predominate over residues 483–495; that stretch reads DSEDSSPEEEEED. Polar residues-rich tracts occupy residues 848–857, 894–904, 927–946, and 966–976; these read SPESSKSTEN, SKSTASLTKPH, PPATSQSPEVKGGTWSQAEK, and PSGQNRTSESS. The segment covering 1018 to 1028 has biased composition (low complexity); that stretch reads PAQPSPSAVQT. Composition is skewed to pro residues over residues 1051–1063 and 1071–1094; these read PHQPKLPNPPPES and PSPPTQHPEASPPFSIPSPSPPMS. Basic and acidic residues predominate over residues 1097–1106; that stretch reads QEHKETRDSE. The span at 1209 to 1226 shows a compositional bias: polar residues; it reads DPTSTSYESQLGQNSSSE. Over residues 1268 to 1277 the composition is skewed to basic and acidic residues; it reads RTGHIQDKSQ. Over residues 1278 to 1288 the composition is skewed to polar residues; it reads PEAQPQQEEVS.

As to expression, specifically expressed in retina.

It is found in the cell projection. Its subcellular location is the cilium. The protein resides in the photoreceptor outer segment. The protein localises to the photoreceptor inner segment. Plays an essential role for normal photoreceptor cell maintenance and vision. This is Photoreceptor cilium actin regulator from Homo sapiens (Human).